Here is a 280-residue protein sequence, read N- to C-terminus: Eukaryotic translation initiation factor 3 subunit F-1 (280 aa).

The MPN domain maps to 8-138; that stretch reads VRVHPVVLFQ…LRAYVCIQLG (131 aa).

This sequence belongs to the eIF-3 subunit F family. Component of the eukaryotic translation initiation factor 3 (eIF-3) complex. The eIF-3 complex interacts with pix.

It localises to the cytoplasm. In terms of biological role, component of the eukaryotic translation initiation factor 3 (eIF-3) complex, which is involved in protein synthesis of a specialized repertoire of mRNAs and, together with other initiation factors, stimulates binding of mRNA and methionyl-tRNAi to the 40S ribosome. The eIF-3 complex specifically targets and initiates translation of a subset of mRNAs involved in cell proliferation. The sequence is that of Eukaryotic translation initiation factor 3 subunit F-1 from Drosophila yakuba (Fruit fly).